A 117-amino-acid chain; its full sequence is UPF0122 protein TTE1463 (117 aa).

Belongs to the UPF0122 family.

Its function is as follows. Might take part in the signal recognition particle (SRP) pathway. This is inferred from the conservation of its genetic proximity to ftsY/ffh. May be a regulatory protein. The protein is UPF0122 protein TTE1463 of Caldanaerobacter subterraneus subsp. tengcongensis (strain DSM 15242 / JCM 11007 / NBRC 100824 / MB4) (Thermoanaerobacter tengcongensis).